We begin with the raw amino-acid sequence, 287 residues long: Glutamate racemase (287 aa).

Substrate contacts are provided by residues 32 to 33 and 64 to 65; these read DS and YG. Catalysis depends on Cys96, which acts as the Proton donor/acceptor. A substrate-binding site is contributed by 97 to 98; it reads NT. Cys208 acts as the Proton donor/acceptor in catalysis. 209-210 is a substrate binding site; that stretch reads TH.

The protein belongs to the aspartate/glutamate racemases family.

It carries out the reaction L-glutamate = D-glutamate. Its pathway is cell wall biogenesis; peptidoglycan biosynthesis. Provides the (R)-glutamate required for cell wall biosynthesis. This is Glutamate racemase from Photorhabdus laumondii subsp. laumondii (strain DSM 15139 / CIP 105565 / TT01) (Photorhabdus luminescens subsp. laumondii).